The chain runs to 425 residues: Glutamyl-tRNA reductase (425 aa).

Residues 49–52, Ser106, 111–113, and Gln117 each bind substrate; these read TCNR and EPQ. Cys50 acts as the Nucleophile in catalysis. An NADP(+)-binding site is contributed by 186-191; that stretch reads GAGETI.

It belongs to the glutamyl-tRNA reductase family. In terms of assembly, homodimer.

It catalyses the reaction (S)-4-amino-5-oxopentanoate + tRNA(Glu) + NADP(+) = L-glutamyl-tRNA(Glu) + NADPH + H(+). It participates in porphyrin-containing compound metabolism; protoporphyrin-IX biosynthesis; 5-aminolevulinate from L-glutamyl-tRNA(Glu): step 1/2. Functionally, catalyzes the NADPH-dependent reduction of glutamyl-tRNA(Glu) to glutamate 1-semialdehyde (GSA). In Saccharophagus degradans (strain 2-40 / ATCC 43961 / DSM 17024), this protein is Glutamyl-tRNA reductase.